A 475-amino-acid polypeptide reads, in one-letter code: MATCTLRGLAVAGGGESSESEDDGWEIGYLDRAVQKLKGPLLPEEKNETFKKALTTGDISLVQELLDSGISVESSFRYGWTPLMYAASVSNVELVRVLLDRGANASFDKDKQTILITACSARGSEEQILKCVELLLSRNADPNVACRRLMTPIMYAARDGHPQVVALLVAHGAEVNSQDENGYTALTWAARQGHKNVVLKLLELGANKMLQTKDGKTPSEIAKRNKHLEIFNFLSLTLNPLEGKLQQLTKEETICKLLTTDSDKENDHLFSSYTAFGDLEIFLHGLGLEHMTDLLKERDITLRHLLTMRKDEFTKNGITSRDQQKILAALKELEVEEIKFGELPEVAKLEISGDEFLNFLLKLNKQCGHLITAVQNIITELPVNSHKIVLEWASPRNFTSVCEELVSNVEDLSKEVCKLKDLIQKLQNERENDPTHIPLMEEVSTWNSKILKRTAIAVCGVGLLLFVCKLTLQRK.

Serine 17, serine 18, and serine 20 each carry phosphoserine. ANK repeat units follow at residues 45-74, 78-107, 110-144, 148-177, 181-210, and 214-243; these read EKNE…SVES, YGWT…NASF, DKQT…DPNV, RLMT…EVNS, NGYT…NKML, and DGKT…PLEG. Residues 272 to 334 enclose the SAM domain; that stretch reads SYTAFGDLEI…KILAALKELE (63 aa).

As to quaternary structure, interacts with DDX4, PIWIL1, RANBP9 and TDRD1.

It is found in the cytoplasm. In terms of biological role, plays a central role during spermatogenesis by repressing transposable elements and preventing their mobilization, which is essential for the germline integrity. Acts via the piRNA metabolic process, which mediates the repression of transposable elements during meiosis by forming complexes composed of piRNAs and Piwi proteins and governs the methylation and subsequent repression of transposons. Its association with pi-bodies suggests a participation in the primary piRNAs metabolic process. Required prior to the pachytene stage to facilitate the production of multiple types of piRNAs, including those associated with repeats involved in the regulation of retrotransposons. May act by mediating protein-protein interactions during germ cell maturation. This is Ankyrin repeat, SAM and basic leucine zipper domain-containing protein 1 (ASZ1) from Mustela putorius furo (European domestic ferret).